We begin with the raw amino-acid sequence, 401 residues long: MSERKLFTSESVSEGHPDKIADQISDAILDAILAKDPEAHVAAETCVYTGSVHVFGEISTTAYVDINRVVRDTIAEIGYTEAEYGFSAESVGVHPSLVEQSPDIAQGVNEALEAREGQSDDFNVIGAGDQGLMFGFAIDETPELMPLPISLSHQLVRRLAALRKSGEISYLRPDAKSQVTVEYDEHDKPVRVDTVVISTQHDPEVSNDQIRQDMIEQVIKAVIPAHYLDEKTRFLINPTGRFVIGGPQGDSGLTGRKIIVDTYGGYARHGGGAFSGKDATKVDRSASYAARYIAKNLVAAGLASKAEVQLAYAIGVAQPVSVRVDTFGTSTVSESILEAAVRQVFDLRPAGIIKMLDLKRPIYKQTAAYGHMGRTDIDLPWEHLDKVSPLTEAVAALSEGA.

ATP is bound at residue His16. A Mg(2+)-binding site is contributed by Asp18. Glu44 contributes to the K(+) binding site. L-methionine contacts are provided by Glu57 and Gln100. A flexible loop region spans residues 100 to 110; that stretch reads QSPDIAQGVNE. ATP is bound by residues 174-176, 241-242, Asp250, 256-257, Ala273, and Lys277; these read DAK, RF, and RK. An L-methionine-binding site is contributed by Asp250. Residue Lys281 participates in L-methionine binding.

This sequence belongs to the AdoMet synthase family. Homotetramer; dimer of dimers. It depends on Mg(2+) as a cofactor. K(+) serves as cofactor.

It localises to the cytoplasm. The catalysed reaction is L-methionine + ATP + H2O = S-adenosyl-L-methionine + phosphate + diphosphate. Its pathway is amino-acid biosynthesis; S-adenosyl-L-methionine biosynthesis; S-adenosyl-L-methionine from L-methionine: step 1/1. Its function is as follows. Catalyzes the formation of S-adenosylmethionine (AdoMet) from methionine and ATP. The overall synthetic reaction is composed of two sequential steps, AdoMet formation and the subsequent tripolyphosphate hydrolysis which occurs prior to release of AdoMet from the enzyme. This chain is S-adenosylmethionine synthase, found in Streptococcus equi subsp. zooepidemicus (strain H70).